The chain runs to 123 residues: Ribosome-binding factor A (123 aa).

The protein belongs to the RbfA family. Monomer. Binds 30S ribosomal subunits, but not 50S ribosomal subunits or 70S ribosomes.

It localises to the cytoplasm. In terms of biological role, one of several proteins that assist in the late maturation steps of the functional core of the 30S ribosomal subunit. Associates with free 30S ribosomal subunits (but not with 30S subunits that are part of 70S ribosomes or polysomes). Required for efficient processing of 16S rRNA. May interact with the 5'-terminal helix region of 16S rRNA. This chain is Ribosome-binding factor A, found in Trichlorobacter lovleyi (strain ATCC BAA-1151 / DSM 17278 / SZ) (Geobacter lovleyi).